Consider the following 211-residue polypeptide: Prolactin-3C1 (211 aa).

A signal peptide spans 1–29; the sequence is MQLSLTQARTWKGLLLLVSCMILWISVTP. Residues asparagine 77 and asparagine 173 are each glycosylated (N-linked (GlcNAc...) asparagine). Cysteines 80 and 187 form a disulfide.

This sequence belongs to the somatotropin/prolactin family. As to expression, expressed exclusively in decidual tissue.

The protein localises to the secreted. This chain is Prolactin-3C1 (Prl3c1), found in Rattus norvegicus (Rat).